Reading from the N-terminus, the 121-residue chain is Large ribosomal subunit protein bL19 (121 aa).

This sequence belongs to the bacterial ribosomal protein bL19 family.

Its function is as follows. This protein is located at the 30S-50S ribosomal subunit interface and may play a role in the structure and function of the aminoacyl-tRNA binding site. The protein is Large ribosomal subunit protein bL19 of Acidothermus cellulolyticus (strain ATCC 43068 / DSM 8971 / 11B).